Here is a 244-residue protein sequence, read N- to C-terminus: High frequency lysogenization protein HflD homolog (244 aa).

The protein belongs to the HflD family.

It is found in the cytoplasm. The protein resides in the cell inner membrane. The sequence is that of High frequency lysogenization protein HflD homolog from Acinetobacter baumannii (strain SDF).